Consider the following 21-residue polypeptide: Cold shock protein CspSt (21 aa).

In terms of domain architecture, CSD spans 1–21; sequence KNGTVKWFNAEKGFGFITSED.

Its subcellular location is the cytoplasm. The sequence is that of Cold shock protein CspSt from Streptococcus thermophilus.